The primary structure comprises 347 residues: BSD domain-containing protein C22A12.14c (347 aa).

Phosphothreonine occurs at positions 123 and 125. Residues 167 to 219 (WEKEISIDGKTEEISLLLEEYPDLRKQMESLVPSEVSYDDFWKRFFWHKEVVQ) enclose the BSD domain. The segment at 229–347 (DEEEIFSWGD…DDDEDDDDWE (119 aa)) is disordered. 3 positions are modified to phosphoserine: S235, S241, and S246. Residues 240 to 251 (RSDEEESDNEQV) are compositionally biased toward acidic residues. Positions 297–312 (HDGEVDGEVKEEEENK) are enriched in basic and acidic residues. A compositionally biased stretch (low complexity) spans 313–325 (VSSSSNIEASQSS). Positions 327–337 (EVKDEANRKVD) are enriched in basic and acidic residues. Residues 338-347 (DDDEDDDDWE) show a composition bias toward acidic residues.

The protein localises to the cytoplasm. The polypeptide is BSD domain-containing protein C22A12.14c (Schizosaccharomyces pombe (strain 972 / ATCC 24843) (Fission yeast)).